Consider the following 343-residue polypeptide: Gene 34 protein (343 aa).

The protein is Gene 34 protein (34) of Alcelaphine herpesvirus 1 (strain C500) (AlHV-1).